A 483-amino-acid polypeptide reads, in one-letter code: V-type proton ATPase subunit H (483 aa).

At serine 483 the chain carries Phosphoserine.

This sequence belongs to the V-ATPase H subunit family. As to quaternary structure, V-ATPase is a heteromultimeric enzyme made up of two complexes: the ATP-hydrolytic V1 complex and the proton translocation V0 complex. The V1 complex consists of three catalytic AB heterodimers that form a heterohexamer, three peripheral stalks each consisting of EG heterodimers, one central rotor including subunits D and F, and the regulatory subunits C and H. The proton translocation complex V0 consists of the proton transport subunit a, a ring of proteolipid subunits c9c'', rotary subunit d, subunits e and f, and the accessory subunits ATP6AP1/Ac45 and ATP6AP2/PRR. Interacts with AP2M1. Interacts with TM9SF4 in colon cancer cells. (Microbial infection) Interacts with HIV-1 Nef protein. In terms of assembly, (Microbial infection) Interacts with M.tuberculosis PtpA, which blocks V-ATPase trafficking and phagosome acidification. As to expression, widely expressed.

It localises to the cytoplasmic vesicle. The protein resides in the clathrin-coated vesicle membrane. Subunit of the V1 complex of vacuolar(H+)-ATPase (V-ATPase), a multisubunit enzyme composed of a peripheral complex (V1) that hydrolyzes ATP and a membrane integral complex (V0) that translocates protons. V-ATPase is responsible for acidifying and maintaining the pH of intracellular compartments and in some cell types, is targeted to the plasma membrane, where it is responsible for acidifying the extracellular environment. Subunit H is essential for V-ATPase activity, but not for the assembly of the complex. Involved in the endocytosis mediated by clathrin-coated pits, required for the formation of endosomes. The chain is V-type proton ATPase subunit H (ATP6V1H) from Homo sapiens (Human).